Consider the following 772-residue polypeptide: Magnetosome formation protease MamE (772 aa).

Residues 1-21 (MTMFNGDVEDGGRSNVSCGKD) are Cytoplasmic-facing. The helical transmembrane segment at 22-42 (LKRYLMLMGVVALVVLFGAFI) threads the bilayer. Residues 43-772 (YRQSSGGLRL…RNGQEFWIVL (730 aa)) lie on the Lumenal side of the membrane. Catalysis depends on charge relay system residues His187, Asp220, and Ser296. The MCR (magnetochrome) 1 motif lies at 374–397 (IAAGTPSPHVDGRQNMDCSNCHDI). The heme site is built by Cys391, Cys394, His395, Cys437, Cys440, His441, Cys488, Cys491, and His492. 2 short sequence motifs (MCR) span residues 420 to 443 (IPANAVSPHTDGRQNMTCNTCHQF) and 470 to 494 (AIRANAANPHTDGRQNMNCASCHQI). In terms of domain architecture, Cytochrome c spans 445 to 558 (GGAAAGPIAF…ALTPLTQRLG (114 aa)). PDZ domains follow at residues 522 to 626 (AINI…LRAG) and 696 to 765 (GATP…HRNG).

The protein in the N-terminal section; belongs to the peptidase S1C family. In terms of assembly, might interact with MamB via PDZ1. Heme is required as a cofactor. The protein isolated from magnetosome membranes has a molecular weight of about 36.3 kDa, probably due to C-terminal cleavage. Subject to autocatalytic cleavage; cleavage also requires MamO; these may be the same event.

It localises to the magnetosome membrane. In terms of biological role, acts at 2 distinct steps of magnetosome formation; required for correct localization of proteins to the magnetosome while the protease activity is required for maturation of small magnetite crystals into larger, functional ones. Probably cleaves at least itself, MamO and MamP; cleavage requires the putative transprot domain of MamO. Involved in localization of some proteins (at least MamA, MamC, MamF, MamI and MamJ) to the magnetosome. One of 7 genes (mamLQBIEMO) able to induce magnetosome membrane biogenesis; coexpression of mamLQRBIEMO in a deletion of the 17 gene mamAB operon restores magnetosome vesicle formation but not magnetite biosynthesis. The protein is Magnetosome formation protease MamE of Magnetospirillum gryphiswaldense (strain DSM 6361 / JCM 21280 / NBRC 15271 / MSR-1).